The primary structure comprises 37 residues: SGDIKAILERNGSERTRLIDILWDVQHLYGHIPDEVL.

The protein belongs to the complex I 51 kDa subunit family. In terms of assembly, tetramer of an alpha and a gamma subunits (flavin-containing dimer), and a delta and a nickel-containing beta subunits (hydrogenase dimer). It depends on FMN as a cofactor. [4Fe-4S] cluster serves as cofactor.

The protein resides in the cytoplasm. The catalysed reaction is H2 + NAD(+) = NADH + H(+). Functionally, subunits alpha and gamma of HoxS constitute an NADH--oxidoreductase. The chain is NAD-reducing hydrogenase HoxS subunit alpha (hoxF) from Rhodococcus opacus (Nocardia opaca).